The primary structure comprises 97 residues: Co-chaperonin GroES (97 aa).

This sequence belongs to the GroES chaperonin family. As to quaternary structure, heptamer of 7 subunits arranged in a ring. Interacts with the chaperonin GroEL.

The protein localises to the cytoplasm. Functionally, together with the chaperonin GroEL, plays an essential role in assisting protein folding. The GroEL-GroES system forms a nano-cage that allows encapsulation of the non-native substrate proteins and provides a physical environment optimized to promote and accelerate protein folding. GroES binds to the apical surface of the GroEL ring, thereby capping the opening of the GroEL channel. This chain is Co-chaperonin GroES, found in Nocardioides sp. (strain ATCC BAA-499 / JS614).